A 24-amino-acid polypeptide reads, in one-letter code: Probable caffeoyl-CoA O-methyltransferase (24 aa).

Belongs to the class I-like SAM-binding methyltransferase superfamily. Cation-dependent O-methyltransferase family. CCoAMT subfamily. A divalent metal cation is required as a cofactor.

It carries out the reaction (E)-caffeoyl-CoA + S-adenosyl-L-methionine = (E)-feruloyl-CoA + S-adenosyl-L-homocysteine + H(+). The protein operates within aromatic compound metabolism; phenylpropanoid biosynthesis. Functionally, methylates caffeoyl-CoA to feruloyl-CoA and 5-hydroxyferuloyl-CoA to sinapoyl-CoA. Plays a role in the synthesis of feruloylated polysaccharides. Involved in the reinforcement of the plant cell wall. Also involved in the responding to wounding or pathogen challenge by the increased formation of cell wall-bound ferulic acid polymers. The sequence is that of Probable caffeoyl-CoA O-methyltransferase from Pinus pinaster (Maritime pine).